The sequence spans 1755 residues: Transposon Ty1-LR2 Gag-Pol polyprotein (1755 aa).

Polar residues-rich tracts occupy residues 1 to 23, 48 to 60, and 127 to 152; these read MESQ…SVTS, TKAN…TPAS, and QSQF…GNTF. Disordered stretches follow at residues 1-93, 126-174, and 352-421; these read MESQ…MMTQ, PQSQ…PPPM, and GSRN…SKST. Positions 153–165 are enriched in low complexity; it reads TDSSSADSDMTST. An RNA-binding region spans residues 299–401; the sequence is NNGIHINNKV…NSKSKTARAH (103 aa). The span at 402–418 shows a compositional bias: low complexity; it reads NVSTSNNSPSTDNDSIS. Residue Ser-416 is modified to Phosphoserine. Asp-461 serves as the catalytic For protease activity; shared with dimeric partner. The interval 583 to 640 is integrase-type zinc finger-like; that stretch reads NVHTSESTRKYPYPFIHRMLAHANAPTIRYSLKNNTITYFNESDVDWSSAIDYQCPDC. In terms of domain architecture, Integrase catalytic spans 660-835; it reads NSYEPFQYLH…AGLDISTLLP (176 aa). The Mg(2+) site is built by Asp-671 and Asp-736. 3 disordered regions span residues 956 to 1087, 1092 to 1111, and 1130 to 1187; these read SKAV…ETEK, RSPS…NIVP, and DLPL…DNET. Low complexity predominate over residues 960-969; it reads SPTDSTPPST. Residues 1005–1015 are compositionally biased toward polar residues; the sequence is STPQISNIEST. Over residues 1038–1053 the composition is skewed to basic and acidic residues; it reads ESSHASKSKDFRHSDS. Polar residues-rich tracts occupy residues 1054–1082 and 1101–1111; these read YSEN…QISD and PENNSSHNIVP. The Bipartite nuclear localization signal motif lies at 1178–1212; the sequence is KKRSLEDNETEIKVSRDTWNTKNMRSLEPPRSKKR. The Reverse transcriptase Ty1/copia-type domain occupies 1338-1476; the sequence is NNYYITQLDI…DILGLEIKYQ (139 aa). Mg(2+) is bound by residues Asp-1346, Asp-1427, Asp-1428, Asp-1610, Glu-1652, and Asp-1685. The region spanning 1610–1752 is the RNase H Ty1/copia-type domain; that stretch reads DASYGNQPYY…IKTFKLLTNK (143 aa).

As to quaternary structure, the capsid protein forms a homotrimer, from which the VLPs are assembled. The protease is a homodimer, whose active site consists of two apposed aspartic acid residues. Post-translationally, initially, virus-like particles (VLPs) are composed of the structural unprocessed proteins Gag and Gag-Pol, and also contain the host initiator methionine tRNA (tRNA(i)-Met) which serves as a primer for minus-strand DNA synthesis, and a dimer of genomic Ty RNA. Processing of the polyproteins occurs within the particle and proceeds by an ordered pathway, called maturation. First, the protease (PR) is released by autocatalytic cleavage of the Gag-Pol polyprotein yielding capsid protein p45 and a Pol-p154 precursor protein. This cleavage is a prerequisite for subsequent processing of Pol-p154 at the remaining sites to release the mature structural and catalytic proteins. Maturation takes place prior to the RT reaction and is required to produce transposition-competent VLPs.

Its subcellular location is the cytoplasm. The protein localises to the nucleus. It catalyses the reaction DNA(n) + a 2'-deoxyribonucleoside 5'-triphosphate = DNA(n+1) + diphosphate. The catalysed reaction is Endonucleolytic cleavage to 5'-phosphomonoester.. Capsid protein (CA) is the structural component of the virus-like particle (VLP), forming the shell that encapsulates the retrotransposons dimeric RNA genome. The particles are assembled from trimer-clustered units and there are holes in the capsid shells that allow for the diffusion of macromolecules. CA also has nucleocapsid-like chaperone activity, promoting primer tRNA(i)-Met annealing to the multipartite primer-binding site (PBS), dimerization of Ty1 RNA and initiation of reverse transcription. Its function is as follows. The aspartyl protease (PR) mediates the proteolytic cleavages of the Gag and Gag-Pol polyproteins after assembly of the VLP. Functionally, reverse transcriptase/ribonuclease H (RT) is a multifunctional enzyme that catalyzes the conversion of the retro-elements RNA genome into dsDNA within the VLP. The enzyme displays a DNA polymerase activity that can copy either DNA or RNA templates, and a ribonuclease H (RNase H) activity that cleaves the RNA strand of RNA-DNA heteroduplexes during plus-strand synthesis and hydrolyzes RNA primers. The conversion leads to a linear dsDNA copy of the retrotransposon that includes long terminal repeats (LTRs) at both ends. In terms of biological role, integrase (IN) targets the VLP to the nucleus, where a subparticle preintegration complex (PIC) containing at least integrase and the newly synthesized dsDNA copy of the retrotransposon must transit the nuclear membrane. Once in the nucleus, integrase performs the integration of the dsDNA into the host genome. This Saccharomyces cerevisiae (strain ATCC 204508 / S288c) (Baker's yeast) protein is Transposon Ty1-LR2 Gag-Pol polyprotein (TY1B-LR2).